A 202-amino-acid chain; its full sequence is LexA repressor (202 aa).

Residues 28–48 (RAEIAMRLGFRSPNAAEEHLK) constitute a DNA-binding region (H-T-H motif). Residues S119 and K156 each act as for autocatalytic cleavage activity in the active site.

This sequence belongs to the peptidase S24 family. Homodimer.

It carries out the reaction Hydrolysis of Ala-|-Gly bond in repressor LexA.. Represses a number of genes involved in the response to DNA damage (SOS response), including recA and lexA. Binds to the 16 bp palindromic sequence 5'-CTGTATATATATACAG-3'. In the presence of single-stranded DNA, RecA interacts with LexA causing an autocatalytic cleavage which disrupts the DNA-binding part of LexA, leading to derepression of the SOS regulon and eventually DNA repair. This is LexA repressor from Serratia proteamaculans (strain 568).